Reading from the N-terminus, the 232-residue chain is Proteasome subunit alpha (232 aa).

The protein belongs to the peptidase T1A family. In terms of assembly, the 20S proteasome core is composed of 14 alpha and 14 beta subunits that assemble into four stacked heptameric rings, resulting in a barrel-shaped structure. The two inner rings, each composed of seven catalytic beta subunits, are sandwiched by two outer rings, each composed of seven alpha subunits. The catalytic chamber with the active sites is on the inside of the barrel. Has a gated structure, the ends of the cylinder being occluded by the N-termini of the alpha-subunits. Is capped by the proteasome-associated ATPase, ARC.

The protein resides in the cytoplasm. It participates in protein degradation; proteasomal Pup-dependent pathway. The formation of the proteasomal ATPase ARC-20S proteasome complex, likely via the docking of the C-termini of ARC into the intersubunit pockets in the alpha-rings, may trigger opening of the gate for substrate entry. Interconversion between the open-gate and close-gate conformations leads to a dynamic regulation of the 20S proteasome proteolysis activity. Functionally, component of the proteasome core, a large protease complex with broad specificity involved in protein degradation. This Acidimicrobium ferrooxidans (strain DSM 10331 / JCM 15462 / NBRC 103882 / ICP) protein is Proteasome subunit alpha.